A 603-amino-acid polypeptide reads, in one-letter code: Probable HECT-type ubiquitin ligase-interacting protein creD (603 aa).

Disordered stretches follow at residues 375–398 (ELDP…GTLS) and 432–499 (LNIT…MATP). The span at 443–455 (TDHESQNDSEHRR) shows a compositional bias: basic and acidic residues. Positions 465–481 (PSSGSNSHSPSSPVLSR) are enriched in low complexity. Residues 482–492 (RPSDEVDHEHV) are compositionally biased toward basic and acidic residues.

This sequence belongs to the arrestin family. As to quaternary structure, interacts with hulA.

Functionally, component of the regulatory network controlling carbon source utilization through ubiquitination and deubiquitination involving creA, creB, creC, creD and acrB. May be involved in signaling by recognizing appropriately phosphorylated substrates via its arrestin domains and then recruit a HECT-type ubiquitin ligase such as hulA, leading to ubiquitination of the substrate, providing a link between ubiquitination and phosphorylation in protein regulation and stability. This chain is Probable HECT-type ubiquitin ligase-interacting protein creD (creD), found in Aspergillus flavus (strain ATCC 200026 / FGSC A1120 / IAM 13836 / NRRL 3357 / JCM 12722 / SRRC 167).